Here is a 317-residue protein sequence, read N- to C-terminus: MSIPVKKNLVSEAKYALKCPNAMSAEYITIHNTANDASAANEISYMIGNTSSTSFHFAVDDQEVIQGLPLNRNAWHTGDGTNGPGNRKSIGVEICYSKSGGPKYEAAEALAISFVAQLLKERGWGIDRVRKHQDWSGKYCPHRILSEGRWDQVKAAIEKELNGGVSAKKAAVSSSASEYHVKKGDTLSGIAASHGASVKTLQSINHITDPNHIKIGQVIKLPQTASASKSHAASSYPLPSGVIKVTSPLTQGTKVKQVQTALAALYFYPDKGAKNHGVDGVYGPKTANAVKRFQSVSGLTADGIYGPKTKAKMEEKL.

An N-terminal signal peptide occupies residues Met-1–Ala-39. One can recognise an N-acetylmuramoyl-L-alanine amidase domain in the interval Ala-40–His-142. Residues Ser-177 to Leu-221 form the LysM domain.

It belongs to the N-acetylmuramoyl-L-alanine amidase 2 family.

Its subcellular location is the secreted. The enzyme catalyses Hydrolyzes the link between N-acetylmuramoyl residues and L-amino acid residues in certain cell-wall glycopeptides.. Its function is as follows. Autolysins are involved in some important biological processes such as cell separation, cell-wall turnover, competence for genetic transformation, formation of the flagella and sporulation. The polypeptide is N-acetylmuramoyl-L-alanine amidase XlyB (xlyB) (Bacillus subtilis (strain 168)).